Here is a 339-residue protein sequence, read N- to C-terminus: Senescence-specific cysteine protease SAG39 (339 aa).

Positions 1 to 23 are cleaved as a signal peptide; sequence MAMAKALLFAILGCLCLCSAVLA. 3 disulfide bridges follow: cysteine 144–cysteine 187, cysteine 178–cysteine 220, and cysteine 276–cysteine 328. Cysteine 147 is a catalytic residue. Active-site residues include histidine 282 and asparagine 303.

Belongs to the peptidase C1 family.

It is found in the vacuole. Functionally, cysteine protease that may have a developmental senescence specific cell death function during apoptosis, heavy metal detoxification, and hypersensitive response. This Oryza sativa subsp. indica (Rice) protein is Senescence-specific cysteine protease SAG39.